Consider the following 271-residue polypeptide: Urease accessory protein UreD (271 aa).

This sequence belongs to the UreD family. In terms of assembly, ureD, UreF and UreG form a complex that acts as a GTP-hydrolysis-dependent molecular chaperone, activating the urease apoprotein by helping to assemble the nickel containing metallocenter of UreC. The UreE protein probably delivers the nickel.

The protein resides in the cytoplasm. Its function is as follows. Required for maturation of urease via the functional incorporation of the urease nickel metallocenter. The sequence is that of Urease accessory protein UreD from Bacillus sp. (strain TB-90).